We begin with the raw amino-acid sequence, 433 residues long: N-lysine methyltransferase SMYD2 (433 aa).

The 235-residue stretch at 7–241 folds into the SET domain; sequence GGLERFCSAG…PGDEVFTSYI (235 aa). 17–19 serves as a coordination point for S-adenosyl-L-methionine; sequence KGR. The Zn(2+) site is built by cysteine 52, cysteine 55, cysteine 65, cysteine 68, cysteine 74, cysteine 78, histidine 86, and cysteine 90. The MYND-type zinc finger occupies 52 to 90; the sequence is CECCFARKEGLSKCGRCKQAFYCDVECQKEDWPLHKLEC. S-adenosyl-L-methionine contacts are provided by residues histidine 137, 206–207, and 258–260; these read NH and YFF. Serine 283 bears the Phosphoserine mark.

This sequence belongs to the class V-like SAM-binding methyltransferase superfamily. In terms of assembly, interacts (via MYND-type zinc finger) with EPB41L3. Interacts (via SET domain) with p53/TP53. Interacts with RB1 and HSP90AA1. Interacts with RNA polymerase II and HELZ. Interacts with SIN3A and HDAC1. In terms of tissue distribution, highly expressed in heart, skeletal muscle and brain tissue. During cardiac development, it is differentially expressed with highest expression in the neonatal heart while very low expression is detected at 12.5 dpc and adult. Specifically expressed in cardiomyocytes (at protein level).

Its subcellular location is the cytoplasm. It is found in the cytosol. The protein resides in the nucleus. The enzyme catalyses L-lysyl(4)-[histone H3] + 3 S-adenosyl-L-methionine = N(6),N(6),N(6)-trimethyl-L-lysyl(4)-[histone H3] + 3 S-adenosyl-L-homocysteine + 3 H(+). The catalysed reaction is L-lysyl-[protein] + S-adenosyl-L-methionine = N(6)-methyl-L-lysyl-[protein] + S-adenosyl-L-homocysteine + H(+). Functionally, protein-lysine N-methyltransferase that methylates both histones and non-histone proteins, including p53/TP53 and RB1. Specifically trimethylates histone H3 'Lys-4' (H3K4me3) in vivo. The activity requires interaction with HSP90alpha. Shows even higher methyltransferase activity on p53/TP53. Monomethylates 'Lys-370' of p53/TP53, leading to decreased DNA-binding activity and subsequent transcriptional regulation activity of p53/TP53. Monomethylates RB1 at 'Lys-860'. This Mus musculus (Mouse) protein is N-lysine methyltransferase SMYD2 (Smyd2).